A 216-amino-acid chain; its full sequence is Octanoyltransferase (216 aa).

The BPL/LPL catalytic domain maps to A33–R216. Substrate-binding positions include R72–H79, A148–G150, and G162–S164. Residue C180 is the Acyl-thioester intermediate of the active site.

The protein belongs to the LipB family.

It is found in the cytoplasm. It catalyses the reaction octanoyl-[ACP] + L-lysyl-[protein] = N(6)-octanoyl-L-lysyl-[protein] + holo-[ACP] + H(+). It participates in protein modification; protein lipoylation via endogenous pathway; protein N(6)-(lipoyl)lysine from octanoyl-[acyl-carrier-protein]: step 1/2. In terms of biological role, catalyzes the transfer of endogenously produced octanoic acid from octanoyl-acyl-carrier-protein onto the lipoyl domains of lipoate-dependent enzymes. Lipoyl-ACP can also act as a substrate although octanoyl-ACP is likely to be the physiological substrate. In Janthinobacterium sp. (strain Marseille) (Minibacterium massiliensis), this protein is Octanoyltransferase.